The chain runs to 637 residues: DNA gyrase subunit B (637 aa).

In terms of domain architecture, Toprim spans 420–534; sequence CEIYIVEGDS…EGHVFIAQPP (115 aa). E426, D499, and D501 together coordinate Mg(2+).

Belongs to the type II topoisomerase GyrB family. As to quaternary structure, heterotetramer, composed of two GyrA and two GyrB chains. In the heterotetramer, GyrA contains the active site tyrosine that forms a transient covalent intermediate with DNA, while GyrB binds cofactors and catalyzes ATP hydrolysis. Mg(2+) is required as a cofactor. It depends on Mn(2+) as a cofactor. The cofactor is Ca(2+).

Its subcellular location is the cytoplasm. The enzyme catalyses ATP-dependent breakage, passage and rejoining of double-stranded DNA.. A type II topoisomerase that negatively supercoils closed circular double-stranded (ds) DNA in an ATP-dependent manner to modulate DNA topology and maintain chromosomes in an underwound state. Negative supercoiling favors strand separation, and DNA replication, transcription, recombination and repair, all of which involve strand separation. Also able to catalyze the interconversion of other topological isomers of dsDNA rings, including catenanes and knotted rings. Type II topoisomerases break and join 2 DNA strands simultaneously in an ATP-dependent manner. The sequence is that of DNA gyrase subunit B from Clostridium acetobutylicum (strain ATCC 824 / DSM 792 / JCM 1419 / IAM 19013 / LMG 5710 / NBRC 13948 / NRRL B-527 / VKM B-1787 / 2291 / W).